A 165-amino-acid polypeptide reads, in one-letter code: 5-formyltetrahydrofolate cyclo-ligase (165 aa).

4-8 (KNSLR) contributes to the ATP binding site. Substrate is bound by residues I51 and E56. ATP is bound at residue 116–124 (RIGFGKGYY). D125 provides a ligand contact to Mg(2+). Residues R126 and W154 each coordinate ATP. Position 155 (D155) interacts with Mg(2+).

Belongs to the 5-formyltetrahydrofolate cyclo-ligase family. Monomer or homodimer. Requires Mg(2+) as cofactor.

It is found in the cytoplasm. The catalysed reaction is (6S)-5-formyl-5,6,7,8-tetrahydrofolate + ATP = (6R)-5,10-methenyltetrahydrofolate + ADP + phosphate. Its function is as follows. Involved in folate metabolism. Catalyzes the irreversible conversion of 5-formyltetrahydrofolate (5-FTHF) to yield 5,10-methenyltetrahydrofolate. The chain is 5-formyltetrahydrofolate cyclo-ligase from Mycoplasma genitalium (strain ATCC 33530 / DSM 19775 / NCTC 10195 / G37) (Mycoplasmoides genitalium).